A 175-amino-acid polypeptide reads, in one-letter code: Ribulose bisphosphate carboxylase small subunit, chloroplastic (175 aa).

The transit peptide at 1 to 34 (MSFATTNKTIVPCATTKQIVRPRFLSNGTISKSR) directs the protein to the chloroplast.

Belongs to the RuBisCO small chain family. In terms of assembly, heterohexadecamer of 8 large and 8 small subunits.

The protein resides in the plastid. It localises to the chloroplast. In terms of biological role, ruBisCO catalyzes two reactions: the carboxylation of D-ribulose 1,5-bisphosphate, the primary event in carbon dioxide fixation, as well as the oxidative fragmentation of the pentose substrate. Both reactions occur simultaneously and in competition at the same active site. Although the small subunit is not catalytic it is essential for maximal activity. The chain is Ribulose bisphosphate carboxylase small subunit, chloroplastic from Batophora oerstedii (Green alga).